The sequence spans 692 residues: MPSRPNPTRPKLFHNRTKTLFLILTISSSLVIFFAILYFIYHLWISLLNRSRTIPFDVAAASPLKLQLFTYKELKLATNDFDESNVIGKGGSGTVFRGITRDGKLFAVKRLDNLSIQTETEFQNELQILGGLKSSFLVTLLGYCVEKNHRFLIYEYMPNKSLQELLFNEDGDSCLNWERRFGIILDVAKALEFMHFGCDPPVIHGDIKPSNVLLDSEFRAKISDFGLSRVKVEGGYGVDLFSQELSGNFGGESTPQTAIGTPTHHEVDFALALQASSSSKNSRTSRNIKEMSLNSMSLAMDGETKGKEVSNDVVLSCEDHEFDQGKEMNLLSPNSVLDLGKGSKQWGRDWWWKQEGSGELCSKDYVREWIGSQIDTANPDWDDDKKVITTPELGVSTRTIDKAEHRDESGLNESRFDTLEEKFAKEEISERKNKRSKNKKKKHRNMEEWWKEEEHQEEMNNKKKIGVLRIKFKNHLKFPHFRYCFRQKGENSVHDREGEAAGEFSFRRGWRRKSNSSSKKKKKNNNGSMGSEMWSGDLFSRELSSTTSMRGTLCYIAPEYGGGCCYLMEKGDIYSFGVLILVIVSGRRPLHVLASPMKLEKANLVSWCRQLAQSGNVLELVDEKLKDGYNKEEAGLCINLALACLQKAPELRPDVSEVVRILRGEMDISSTAFEFSPSPPGKVYGSRSKRRS.

Residues 20–40 traverse the membrane as a helical segment; the sequence is LFLILTISSSLVIFFAILYFI. One can recognise a Protein kinase domain in the interval 81–673; the sequence is FDESNVIGKG…GEMDISSTAF (593 aa). ATP contacts are provided by residues 87–95 and Lys109; that span reads IGKGGSGTV. The active-site Proton acceptor is the Asp206. 2 disordered regions span residues 427 to 446 and 511 to 533; these read EISE…HRNM and RRKS…GSEM. Composition is skewed to basic residues over residues 432-444 and 511-524; these read KNKR…KKHR and RRKS…KKKN.

Belongs to the protein kinase superfamily. Ser/Thr protein kinase family.

It localises to the cell membrane. The catalysed reaction is L-seryl-[protein] + ATP = O-phospho-L-seryl-[protein] + ADP + H(+). The enzyme catalyses L-threonyl-[protein] + ATP = O-phospho-L-threonyl-[protein] + ADP + H(+). The protein is Putative receptor-like protein kinase At1g80870 of Arabidopsis thaliana (Mouse-ear cress).